The sequence spans 440 residues: NADH-quinone oxidoreductase subunit D 2 (440 aa).

It belongs to the complex I 49 kDa subunit family. In terms of assembly, NDH-1 is composed of 14 different subunits. Subunits NuoB, C, D, E, F, and G constitute the peripheral sector of the complex.

The protein resides in the cell membrane. The catalysed reaction is a quinone + NADH + 5 H(+)(in) = a quinol + NAD(+) + 4 H(+)(out). In terms of biological role, NDH-1 shuttles electrons from NADH, via FMN and iron-sulfur (Fe-S) centers, to quinones in the respiratory chain. The immediate electron acceptor for the enzyme in this species is believed to be a menaquinone. Couples the redox reaction to proton translocation (for every two electrons transferred, four hydrogen ions are translocated across the cytoplasmic membrane), and thus conserves the redox energy in a proton gradient. The sequence is that of NADH-quinone oxidoreductase subunit D 2 from Streptomyces coelicolor (strain ATCC BAA-471 / A3(2) / M145).